Here is a 407-residue protein sequence, read N- to C-terminus: BTB/POZ and MATH domain-containing protein 1 (407 aa).

In terms of domain architecture, MATH spans 33–167 (NGFHEFKICG…ENSLLVRCRV (135 aa)). Residues 203-270 (CDVVFQVDGE…IYWDELPDMQ (68 aa)) enclose the BTB domain.

The protein belongs to the Tdpoz family. In terms of assembly, homodimer or heterodimer with BPM3, BPM5 and BPM6. Interacts with CUL3A and CUL3B. Interacts with RAP2-4 and RAP2-13. Binds to MYB56 at the promoter of FLOWERING LOCUS T (FT). Ubiquitous.

It is found in the nucleus. The protein operates within protein modification; protein ubiquitination. May act as a substrate-specific adapter of an E3 ubiquitin-protein ligase complex (CUL3-RBX1-BTB) which mediates the ubiquitination and subsequent proteasomal degradation of target proteins. The polypeptide is BTB/POZ and MATH domain-containing protein 1 (BPM1) (Arabidopsis thaliana (Mouse-ear cress)).